A 396-amino-acid chain; its full sequence is Lipid-A-disaccharide synthase (396 aa).

The protein belongs to the LpxB family.

The enzyme catalyses a lipid X + a UDP-2-N,3-O-bis[(3R)-3-hydroxyacyl]-alpha-D-glucosamine = a lipid A disaccharide + UDP + H(+). Its pathway is bacterial outer membrane biogenesis; LPS lipid A biosynthesis. In terms of biological role, condensation of UDP-2,3-diacylglucosamine and 2,3-diacylglucosamine-1-phosphate to form lipid A disaccharide, a precursor of lipid A, a phosphorylated glycolipid that anchors the lipopolysaccharide to the outer membrane of the cell. This Nitrobacter hamburgensis (strain DSM 10229 / NCIMB 13809 / X14) protein is Lipid-A-disaccharide synthase.